A 1340-amino-acid polypeptide reads, in one-letter code: WASH complex subunit 2 (1340 aa).

The interval 1-219 (MNRTTPDQEL…VGSDRGSIVD (219 aa)) is sufficient for interaction with WASHC3, WASHC4 and WASHC5; required for interaction with WASHC1. Phosphoserine occurs at positions 157, 159, 204, 205, and 209. Low complexity predominate over residues 201-213 (GELSSEEGSVGSD). A disordered region spans residues 201–404 (GELSSEEGSV…SSSKPGKKIP (204 aa)). Residues 219–231 (DTEEEKEEEESDE) show a composition bias toward acidic residues. The span at 232-241 (DFAHHSDNDQ) shows a compositional bias: basic and acidic residues. 2 stretches are compositionally biased toward acidic residues: residues 249-258 (SDEEEDDDGC) and 265-275 (EKEEEDIEDIE). Ser-287 bears the Phosphoserine mark. A compositionally biased stretch (basic and acidic residues) spans 292–306 (LAARIKGDAVGRVDE). Thr-330 is modified (phosphothreonine). Gly residues predominate over residues 354 to 365 (GSGGGLFSGGKG). The segment at 355 to 599 (SGGGLFSGGK…QTLSLQAQGE (245 aa)) is sufficient for interaction with CCDC93. The interval 356–1340 (GGGLFSGGKG…DDPLNAFGGQ (985 aa)) is interaction with VPS35. Positions 366–377 (LFDDEDEESDLF) match the LFa 1 motif. Phosphoserine occurs at positions 394 and 396. Short sequence motifs (LFa) lie at residues 410–418 (VFLGDTDVF), 449–462 (LFDD…DDFF), and 481–490 (IFGDDEGDLF). Disordered regions lie at residues 421-586 (ASVP…GGTA), 618-663 (SSDE…KASL), and 695-838 (DSGG…STGV). The span at 450–461 (FDDDDGDDDDDF) shows a compositional bias: acidic residues. Basic and acidic residues predominate over residues 506 to 516 (DENKARAEKKV). A compositionally biased stretch (low complexity) spans 517 to 527 (SLPSSKNLKPS). 3 consecutive short sequence motifs (LFa) follow at residues 536-547 (LFSDEEDSEDLF), 571-582 (LFEDEDEEDNLF), and 616-628 (LFSS…WNIP). 2 positions are modified to phosphoserine: Ser-538 and Ser-543. Over residues 546–566 (LFSSQSASKLKGAPLLPGKLP) the composition is skewed to low complexity. Phosphoserine is present on residues Ser-618 and Ser-619. Positions 636-646 (SDSRSKGESRD) are enriched in basic and acidic residues. 3 short sequence motifs (LFa) span residues 663–673 (LFEEDEEDDLF), 689–701 (LFED…GSLF), and 725–737 (LFSD…AQLG). A phosphoserine mark is found at Ser-727, Ser-751, Ser-786, and Ser-801. Over residues 740–767 (PVDKKVESAKESLKFGRTDVAESEKEGL) the composition is skewed to basic and acidic residues. Positions 802 to 816 (LFDEEEDKMEDQNTI) match the LFa 11 motif. Residues 822–833 (EVGKGRDPDARP) show a composition bias toward basic and acidic residues. 2 short sequence motifs (LFa) span residues 838–846 (VFQDEELLF) and 855–861 (DPDVDLF). Ser-873 and Ser-876 each carry phosphoserine. An LFa 14 motif is present at residues 877 to 887 (LFGDDEDDDLF). Disordered regions lie at residues 906 to 950 (DYSV…KEPS) and 987 to 1205 (FPSS…EDED). Over residues 916–930 (KHPETIQGIKEKGIW) the composition is skewed to basic and acidic residues. Positions 936 to 1340 (QDSSGLAPFK…DDPLNAFGGQ (405 aa)) are interaction with phospholipids. The segment covering 1027–1045 (NKSRVKMRGKRRPQTRAAR) has biased composition (basic residues). The tract at residues 1028 to 1046 (KSRVKMRGKRRPQTRAARR) is required for interaction with F-actin-capping protein subunit alpha (CAPZA1 or CAPZA2 or CAPZA3). Residues Ser-1053 and Ser-1086 each carry the phosphoserine modification. The segment covering 1093 to 1109 (EALAAAAAPWEGGPVPG) has biased composition (low complexity). Ser-1113 is modified (phosphoserine). Short sequence motifs (LFa) lie at residues 1128–1135 (LFDSGDIF), 1170–1184 (MFPA…DDLF), 1200–1208 (LLEDEDDLF), 1233–1239 (IFEDDIF), 1261–1269 (LFDDNIDIF), and 1289–1298 (IFDDDMDDIF). A phosphoserine mark is found at Ser-1178 and Ser-1179. The interval 1301 to 1325 (GIQAKTAKPKSRSAQAAPEPRFEHK) is disordered. The LFa 21 signature appears at 1329–1337 (IFDDPLNAF).

Belongs to the FAM21 family. As to quaternary structure, component of the WASH core complex also described as WASH regulatory complex (SHRC) composed of WASHC1, WASHC2, WASHC3, WASHC4 and WASHC5; in the complex interacts (via N-terminus) directly with WASHC1. The WASH core complex associates with the F-actin-capping protein dimer (formed by CAPZA1, CAPZA2 or CAPZA3 and CAPZB) in a transient or substoichiometric manner which was initially described as WASH complex. Interacts with VPS35; mediates the association with the retromer CSC complex. Interacts with FKBP15. Interacts with CCDC93, CCDC22, VPS35L; indicative for an association of the WASH core complex with the CCC and retriever complexes. Directly interacts with TBC1D23.

The protein localises to the early endosome membrane. It is found in the cell membrane. Acts as a component of the WASH core complex that functions as a nucleation-promoting factor (NPF) at the surface of endosomes, where it recruits and activates the Arp2/3 complex to induce actin polymerization, playing a key role in the fission of tubules that serve as transport intermediates during endosome sorting. Mediates the recruitment of the WASH core complex to endosome membranes via binding to phospholipids and VPS35 of the retromer CSC. Mediates the recruitment of the F-actin-capping protein dimer to the WASH core complex probably promoting localized F-actin polymerization needed for vesicle scission. Via its C-terminus binds various phospholipids, most strongly phosphatidylinositol 4-phosphate (PtdIns-(4)P), phosphatidylinositol 5-phosphate (PtdIns-(5)P) and phosphatidylinositol 3,5-bisphosphate (PtdIns-(3,5)P2). Involved in the endosome-to-plasma membrane trafficking and recycling of SNX27-retromer-dependent cargo proteins, such as GLUT1. Required for the association of DNAJC13, ENTR1, ANKRD50 with retromer CSC subunit VPS35. Required for the endosomal recruitment of CCC and retriever complexes subunits COMMD1 and CCDC93 as well as the retrievere complex subunit VPS35L. This Pongo abelii (Sumatran orangutan) protein is WASH complex subunit 2.